Consider the following 72-residue polypeptide: Exodeoxyribonuclease 7 small subunit (72 aa).

This sequence belongs to the XseB family. As to quaternary structure, heterooligomer composed of large and small subunits.

It localises to the cytoplasm. It catalyses the reaction Exonucleolytic cleavage in either 5'- to 3'- or 3'- to 5'-direction to yield nucleoside 5'-phosphates.. Its function is as follows. Bidirectionally degrades single-stranded DNA into large acid-insoluble oligonucleotides, which are then degraded further into small acid-soluble oligonucleotides. The polypeptide is Exodeoxyribonuclease 7 small subunit (Chlamydia trachomatis serovar L2 (strain ATCC VR-902B / DSM 19102 / 434/Bu)).